A 127-amino-acid polypeptide reads, in one-letter code: Histone H2B.2 (127 aa).

Residues Met-1–Glu-35 are disordered. Residues Lys-7 and Lys-8 each carry the N6-acetyllysine; alternate modification. Glycyl lysine isopeptide (Lys-Gly) (interchain with G-Cter in SUMO); alternate cross-links involve residues Lys-7 and Lys-8. Ser-11 bears the Phosphoserine mark. Residues Ser-11–Asp-24 show a composition bias toward low complexity. Lys-12 bears the N6-acetyllysine mark. Lys-120 is covalently cross-linked (Glycyl lysine isopeptide (Lys-Gly) (interchain with G-Cter in ubiquitin)).

It belongs to the histone H2B family. The nucleosome is a histone octamer containing two molecules each of H2A, H2B, H3 and H4 assembled in one H3-H4 heterotetramer and two H2A-H2B heterodimers. The octamer wraps approximately 147 bp of DNA. In terms of processing, monoubiquitinated by the UBC2-BRE1 complex to form H2BK123ub1. H2BK123ub1 gives a specific tag for epigenetic transcriptional activation and is also prerequisite for H3K4me and H3K79me formation. H2BK123ub1 also modulates the formation of double-strand breaks during meiosis and is a prerequisite for DNA-damage checkpoint activation. Phosphorylated by STE20 to form H2BS10ph during progression through meiotic prophase. May be correlated with chromosome condensation. Post-translationally, acetylation of N-terminal lysines and particularly formation of H2BK11ac has a positive effect on transcription. In terms of processing, sumoylation to form H2BK6su or H2BK7su occurs preferentially near the telomeres and represses gene transcription.

The protein localises to the nucleus. It localises to the chromosome. Functionally, core component of nucleosome. Nucleosomes wrap and compact DNA into chromatin, limiting DNA accessibility to the cellular machineries which require DNA as a template. Histones thereby play a central role in transcription regulation, DNA repair, DNA replication and chromosomal stability. DNA accessibility is regulated via a complex set of post-translational modifications of histones, also called histone code, and nucleosome remodeling. The polypeptide is Histone H2B.2 (HTB2) (Eremothecium gossypii (strain ATCC 10895 / CBS 109.51 / FGSC 9923 / NRRL Y-1056) (Yeast)).